The sequence spans 461 residues: Thyroid hormone receptor beta (461 aa).

Residues 1 to 24 (MTPNSMTENGLPAWDKQKPRPDRG) form a disordered region. Residues 1–106 (MTPNSMTENG…IPSYLDKDEL (106 aa)) form a modulating region. The span at 15–24 (DKQKPRPDRG) shows a compositional bias: basic and acidic residues. Residues Cys107, Cys110, Cys124, Cys127, Cys145, Cys151, Cys161, and Cys164 each contribute to the Zn(2+) site. NR C4-type zinc fingers lie at residues 107 to 127 (CVVCGDKATGYHYRCITCEGC) and 145 to 169 (CKYEGKCIIDKVTRNQCQECRFKKC). Residues 107–181 (CVVCGDKATG…VGMATDLVLD (75 aa)) constitute a DNA-binding region (nuclear receptor). An NR LBD domain is found at 217-461 (EEWELIKTVT…PPLFLEVFED (245 aa)). Positions 244 to 461 (KFLPEDIGQA…PPLFLEVFED (218 aa)) are interaction with NR2F6. Residues Arg282, Asn331, and His435 each contribute to the 3,3',5-triiodo-L-thyronine site. Arg282, Asn331, and His435 together coordinate L-thyroxine.

This sequence belongs to the nuclear hormone receptor family. NR1 subfamily. In terms of assembly, binds DNA as a dimer; homodimer and heterodimer with RXRB. Interacts with the coactivators NCOA1/SRC1, NCOA2/GRIP1, NCOA7 and MED1/TRAP220 in a ligand-inducible manner. Interacts with the corepressor NCOR1 in absence of ligand. Interacts with C1D. Interacts with NR2F6; the interaction impairs the binding of the THRB homodimer and THRB:RXRB heterodimer to T3 response elements. Interacts with PRMT2 and THRSP. Interacts with TACC1; this interaction is decreased in the presence of thyroid hormone T3.

The protein resides in the nucleus. Nuclear hormone receptor that can act as a repressor or activator of transcription. High affinity receptor for thyroid hormones, including triiodothyronine and thyroxine. This is Thyroid hormone receptor beta (Thrb) from Mus musculus (Mouse).